The primary structure comprises 325 residues: Glyoxylate/hydroxypyruvate reductase B (325 aa).

Active-site residues include arginine 237 and glutamate 266. Histidine 285 (proton donor) is an active-site residue.

This sequence belongs to the D-isomer specific 2-hydroxyacid dehydrogenase family. GhrB subfamily. Homodimer.

The protein resides in the cytoplasm. It catalyses the reaction glycolate + NADP(+) = glyoxylate + NADPH + H(+). The enzyme catalyses (R)-glycerate + NAD(+) = 3-hydroxypyruvate + NADH + H(+). It carries out the reaction (R)-glycerate + NADP(+) = 3-hydroxypyruvate + NADPH + H(+). Its function is as follows. Catalyzes the NADPH-dependent reduction of glyoxylate and hydroxypyruvate into glycolate and glycerate, respectively. In Serratia proteamaculans (strain 568), this protein is Glyoxylate/hydroxypyruvate reductase B.